A 60-amino-acid chain; its full sequence is Large ribosomal subunit protein bL32 (60 aa).

Residues 1–60 are disordered; that stretch reads MAVQQVKKSRSKRDMRRSHDSLTNPTLSTDKSTGELHLRHHVSPNGFYKGRKVVDTKSED. The segment covering 7–16 has biased composition (basic residues); that stretch reads KKSRSKRDMR. Over residues 22-31 the composition is skewed to polar residues; the sequence is LTNPTLSTDK.

The protein belongs to the bacterial ribosomal protein bL32 family.

This Francisella tularensis subsp. holarctica (strain LVS) protein is Large ribosomal subunit protein bL32.